The following is a 100-amino-acid chain: NAD(P)H-quinone oxidoreductase subunit 4L, chloroplastic (100 aa).

3 helical membrane passes run 1-21 (MIENALILGAYLFCIGFYGLI), 29-49 (ALMCLELIFNAVNINFVTFSN), and 63-83 (ISVIAIAAAEAAIGLSIILII).

Belongs to the complex I subunit 4L family. NDH is composed of at least 16 different subunits, 5 of which are encoded in the nucleus.

It localises to the plastid. The protein resides in the chloroplast thylakoid membrane. The enzyme catalyses a plastoquinone + NADH + (n+1) H(+)(in) = a plastoquinol + NAD(+) + n H(+)(out). It catalyses the reaction a plastoquinone + NADPH + (n+1) H(+)(in) = a plastoquinol + NADP(+) + n H(+)(out). Functionally, NDH shuttles electrons from NAD(P)H:plastoquinone, via FMN and iron-sulfur (Fe-S) centers, to quinones in the photosynthetic chain and possibly in a chloroplast respiratory chain. The immediate electron acceptor for the enzyme in this species is believed to be plastoquinone. Couples the redox reaction to proton translocation, and thus conserves the redox energy in a proton gradient. The sequence is that of NAD(P)H-quinone oxidoreductase subunit 4L, chloroplastic from Angiopteris evecta (Mule's foot fern).